We begin with the raw amino-acid sequence, 527 residues long: Transcription initiation factor TFIID subunit 6b (527 aa).

The Histone-fold domain maps to 3 to 99 (TKESIEVIAQ…NLEPTSGSKS (97 aa)). 2 disordered regions span residues 410 to 442 (SPPTSSVWKTNGKLTSPRQSKRKASSDNLTHQP) and 462 to 492 (MRGTTTVPQQSHTDADARHHNSPSTIAPKTS). 2 stretches are compositionally biased toward polar residues: residues 416–427 (VWKTNGKLTSPR) and 462–473 (MRGTTTVPQQSH).

The protein belongs to the TAF6 family. As to quaternary structure, component of the TFIID complex. TFIID is composed of TATA binding protein (TBP) and a number of TBP-associated factors (TAFs) whose MWs range from 14-217 kDa. Interacts with TAF5 and TAF9. Expressed in roots, leaves, inflorescences and siliques.

The protein resides in the nucleus. Its function is as follows. TAFs are components of the transcription factor IID (TFIID) complex that is essential for mediating regulation of RNA polymerase transcription. Not redundant with TAF6. This Arabidopsis thaliana (Mouse-ear cress) protein is Transcription initiation factor TFIID subunit 6b (TAF6B).